The primary structure comprises 206 residues: MARYLGPKCRLSRREKTDLQLKSGIRAIDSKCNIERIPGMHWQRRGRTTDYGVQLRMKQMIKRYYDVLEKQFANYYKQADRLKGSTGDNLLKLLESRLDNVVYRMGFSATRAEARQLISHKAILVNGEVVNIPSYQVKPGDIIEVRSRAKGQLRIKGALELAQQRAPISWIEVDTKKMTGTFKEQPDVAELPAEFKVNLVVELYSK.

One can recognise an S4 RNA-binding domain in the interval 96–158; it reads SRLDNVVYRM…AKGQLRIKGA (63 aa).

It belongs to the universal ribosomal protein uS4 family. Part of the 30S ribosomal subunit. Contacts protein S5. The interaction surface between S4 and S5 is involved in control of translational fidelity.

Functionally, one of the primary rRNA binding proteins, it binds directly to 16S rRNA where it nucleates assembly of the body of the 30S subunit. With S5 and S12 plays an important role in translational accuracy. The polypeptide is Small ribosomal subunit protein uS4 (Coxiella burnetii (strain CbuK_Q154) (Coxiella burnetii (strain Q154))).